Consider the following 269-residue polypeptide: Ribosomal RNA small subunit methyltransferase J (269 aa).

S-adenosyl-L-methionine contacts are provided by residues 125 to 126 (ER) and aspartate 179.

It belongs to the methyltransferase superfamily. RsmJ family.

It is found in the cytoplasm. It carries out the reaction guanosine(1516) in 16S rRNA + S-adenosyl-L-methionine = N(2)-methylguanosine(1516) in 16S rRNA + S-adenosyl-L-homocysteine + H(+). Its function is as follows. Specifically methylates the guanosine in position 1516 of 16S rRNA. In Pseudomonas syringae pv. tomato (strain ATCC BAA-871 / DC3000), this protein is Ribosomal RNA small subunit methyltransferase J.